The primary structure comprises 605 residues: UvrABC system protein C (605 aa).

Positions Gln-14–Ile-92 constitute a GIY-YIG domain. Residues Lys-202–Ile-237 form the UVR domain.

The protein belongs to the UvrC family. Interacts with UvrB in an incision complex.

It is found in the cytoplasm. In terms of biological role, the UvrABC repair system catalyzes the recognition and processing of DNA lesions. UvrC both incises the 5' and 3' sides of the lesion. The N-terminal half is responsible for the 3' incision and the C-terminal half is responsible for the 5' incision. The polypeptide is UvrABC system protein C (Wolbachia pipientis subsp. Culex pipiens (strain wPip)).